The following is a 727-amino-acid chain: Centrosomal protein kizuna (727 aa).

A disordered region spans residues 1 to 20; sequence MTERSGRGGGTRGASALPSP. Residues 77–124 adopt a coiled-coil conformation; sequence KNARIRNQEYLKQFERIQANITASLEKLQELKIEFETQIKKMQLLSKD. Disordered regions lie at residues 176 to 226, 271 to 456, and 564 to 727; these read DFTT…NKSD, EGKK…FTNL, and RLAV…PRTP. Over residues 198–223 the composition is skewed to polar residues; sequence HQQTAQSSDVTGSRVVQTPGDTQCLN. The segment covering 286–324 has biased composition (basic and acidic residues); it reads LSPENRTTDLKCDSSRRSEGSEGEILTREHIEVEEERAR. Ser328 carries the phosphoserine modification. The span at 343 to 359 shows a compositional bias: basic and acidic residues; the sequence is PQEKPPARKASSDHLPC. Low complexity predominate over residues 380–390; that stretch reads LSSSSDLTVSV. Thr387 carries the phosphothreonine; by PLK1 modification. Residues 442 to 455 are compositionally biased toward polar residues; it reads APSTPDSPNESFTN. Low complexity predominate over residues 569 to 583; it reads SSKSSCSLPSTPSDE. Residues 603 to 613 are compositionally biased toward acidic residues; sequence QEDESREESTE. Over residues 631–642 the composition is skewed to polar residues; the sequence is LKQSALQGSTHQ. Composition is skewed to low complexity over residues 659-669 and 677-689; these read GLKTGSGTFKT and SEAS…GSPL. Residues Ser711, Ser714, and Ser716 each carry the phosphoserine modification.

This sequence belongs to the kizuna family. As to quaternary structure, interacts with AKAP9, CEP72, ODF2, PCNT and TUBGCP2. Phosphorylation at Thr-387 by PLK1 is not needed for centrosomal localization or pericentriolar material expansion but is indispensable for spindle-pole stabilization.

Its subcellular location is the cytoplasm. The protein resides in the cytoskeleton. It localises to the microtubule organizing center. The protein localises to the centrosome. It is found in the cilium basal body. Centrosomal protein required for establishing a robust mitotic centrosome architecture that can endure the forces that converge on the centrosomes during spindle formation. Required for stabilizing the expanded pericentriolar material around the centriole. The sequence is that of Centrosomal protein kizuna (KIZ) from Bos taurus (Bovine).